Reading from the N-terminus, the 491-residue chain is Pre-glycoprotein polyprotein GP complex (491 aa).

Residue Gly-2 is the site of N-myristoyl glycine; by host attachment. The Extracellular portion of the chain corresponds to 2–17 (GQIVTFFQEVPHVIEE). Residues 18–33 (VMNIVLIALSVLAVLK) traverse the membrane as a helical segment. The Cytoplasmic segment spans residues 34–58 (GLYNFATCGLVGLVTFLLLCGRSCT). Position 57 (Cys-57) interacts with Zn(2+). At 59 to 432 (TSLYKGVYEL…QGKTPLGLVD (374 aa)) the chain is on the extracellular side. Residues Asn-79, Asn-89, Asn-99, Asn-109, Asn-119, and Asn-167 are each glycosylated (N-linked (GlcNAc...) asparagine; by host). 6 disulfides stabilise this stretch: Cys-86-Cys-231, Cys-118-Cys-155, Cys-180-Cys-212, Cys-279-Cys-292, Cys-301-Cys-310, and Cys-364-Cys-385. An N-linked (GlcNAc...) asparagine; by host glycan is attached at Asn-224. N-linked (GlcNAc...) asparagine; by host glycans are attached at residues Asn-365, Asn-373, Asn-390, and Asn-395. Residues 433–453 (LFVFSTSFYLISIFLHLVKIP) traverse the membrane as a helical segment. The Cytoplasmic portion of the chain corresponds to 454 to 491 (THRHIVGKSCPKPHRLNHMGICSCGLYKQPGVPVKWKR). His-455, His-457, Cys-463, His-467, Cys-475, and Cys-477 together coordinate Zn(2+).

It belongs to the arenaviridae GPC protein family. As to quaternary structure, interacts with glycoprotein G2. Part of the GP complex (GP-C) together with glycoprotein G1 and glycoprotein G2. The GP-complex interacts with protein Z, which interacts with ribonucleocapsid; these interactions may induce virion budding. In terms of assembly, homotrimer; disulfide-linked. In pre-fusion state, G1 homotrimers bind G2 homotrimers via ionic interactions. Part of the GP complex (GP-C) together with glycoprotein G2 and the stable signal peptide. Interacts with the primary host receptor DAG1 on the cell surface; this interaction occurs at pH 8.0 but not at pH 6.0 and below. Upon virus internalization and at endosomal pH, interacts with the host lysosomal protein LAMP1; this interaction mediates G1 dissociation from GP-C and membrane fusion. The GP-complex interacts with protein Z, which interacts with ribonucleocapsid; these interactions may induce virion budding. Homotrimer. Interacts with the stable signal peptide. In pre-fusion state, G2 homotrimers bind G1 homotrimers via ionic interactions. Part of the GP complex (GP-C) together with glycoprotein G1 and the stable signal peptide. Acidification in the endosome triggers rearrangements, which ultimately leads to a 6 helix bundle formed by the two heptad repeat domains (HR1 and HR2) in post-fusion state. The GP-complex interacts with protein Z, which interacts with ribonucleocapsid; these interactions may induce virion budding. Specific enzymatic cleavages in vivo yield mature proteins. GP-C polyprotein is cleaved in the endoplasmic reticulum by the host protease MBTPS1. Only cleaved glycoprotein is incorporated into virions. Post-translationally, the SSP remains stably associated with the GP complex following cleavage by signal peptidase and plays crucial roles in the trafficking of GP through the secretory pathway. In terms of processing, myristoylation is necessary for GP2-mediated fusion activity.

It localises to the virion membrane. The protein resides in the host endoplasmic reticulum membrane. It is found in the host Golgi apparatus membrane. The protein localises to the host cell membrane. Its function is as follows. Functions as a cleaved signal peptide that is retained as the third component of the GP complex (GP-C). Helps to stabilize the spike complex in its native conformation. The SSP is required for efficient glycoprotein expression, post-translational maturation cleavage of G1 and G2, glycoprotein transport to the cell surface plasma membrane, formation of infectious virus particles, and acid pH-dependent glycoprotein-mediated cell fusion. Functionally, forms the virion spikes together with glycoprotein G2. The glycoprotein spike trimers are connected to the underlying matrix. Interacts with the host receptor. Mediates virus attachment to the host primary receptor alpha-dystroglycan DAG1 (alpha-DG) at the cell surface. This attachment induces virion internalization apparently through macropinocytosis. Following endocytosis, there is a pH-dependent switch from binding DAG1 to the host lysosomal receptor LAMP1. This latter binding triggers the dissociation of GP1, exposing the fusion subunit, GP2, such that fusion can occur. Down-modulates host DAG1. In terms of biological role, forms the virion spikes together with glycoprotein G1. The glycoprotein spike trimers are connected to the underlying matrix. Class I viral fusion protein that directs fusion of viral and host endosomal membranes, leading to delivery of the nucleocapsid into the cytoplasm. Membrane fusion is mediated by irreversible conformational changes induced by acidification. This Homo sapiens (Human) protein is Pre-glycoprotein polyprotein GP complex.